The primary structure comprises 1183 residues: DNA-directed RNA polymerase subunit beta (1183 aa).

Residues 1155 to 1183 are disordered; that stretch reads ADVDEDDVNEHKVNIQQSSIPESQKETTD.

It belongs to the RNA polymerase beta chain family. As to quaternary structure, the RNAP catalytic core consists of 2 alpha, 1 beta, 1 beta' and 1 omega subunit. When a sigma factor is associated with the core the holoenzyme is formed, which can initiate transcription.

The enzyme catalyses RNA(n) + a ribonucleoside 5'-triphosphate = RNA(n+1) + diphosphate. Its function is as follows. DNA-dependent RNA polymerase catalyzes the transcription of DNA into RNA using the four ribonucleoside triphosphates as substrates. In Staphylococcus carnosus (strain TM300), this protein is DNA-directed RNA polymerase subunit beta.